Consider the following 406-residue polypeptide: LIM/homeobox protein Lhx1 (406 aa).

LIM zinc-binding domains are found at residues 4–54 (CAGC…CKND) and 63–117 (CAGC…CKED). 2 disordered regions span residues 128–187 (NSLH…RTTI) and 293–374 (YDFF…EVFG). Over residues 137–148 (SDPSLSPDSQDP) the composition is skewed to low complexity. Residues 151–167 (DDAKDSESANVSDKEAG) show a composition bias toward basic and acidic residues. Ser162 is subject to Phosphoserine. The segment at residues 180–239 (RRGPRTTIKAKQLETLKAAFAATPKPTRHIREQLAQETGLNMRVIQVWFQNRRSKERRMK) is a DNA-binding region (homeobox). Over residues 315–327 (PSSGPSGTPLGGL) the composition is skewed to low complexity. Over residues 352 to 362 (GDSPSPEPSLP) the composition is skewed to pro residues.

As to quaternary structure, interacts with LDB1 via the tandem LIM domains. In terms of tissue distribution, expressed in the brain, thymus, and tonsils. Expressed in samples from patients with chronic myeloid leukemia (CML) and in 58% of acute myeloid leukemia (AML) cell lines.

The protein resides in the nucleus. Its function is as follows. Potential transcription factor. May play a role in early mesoderm formation and later in lateral mesoderm differentiation and neurogenesis. The polypeptide is LIM/homeobox protein Lhx1 (LHX1) (Homo sapiens (Human)).